Consider the following 63-residue polypeptide: uncharacterized protein (63 aa).

The chain crosses the membrane as a helical span at residues 20–40 (IVLLISFIFFFGRFIYSSVGA).

It is found in the membrane. This is an uncharacterized protein from Escherichia coli O157:H7.